The following is a 271-amino-acid chain: Cyanophycinase (271 aa).

Residues serine 132, histidine 174, and glutamate 201 each act as charge relay system in the active site.

The protein belongs to the peptidase S51 family. In terms of assembly, homodimer.

The catalysed reaction is [L-4-(L-arginin-2-N-yl)aspartate](n) + H2O = [L-4-(L-arginin-2-N-yl)aspartate](n-1) + L-4-(L-arginin-2-N-yl)aspartate. In terms of biological role, exopeptidase that catalyzes the hydrolytic cleavage of multi-L-arginyl-poly-L-aspartic acid (cyanophycin; a water-insoluble reserve polymer) into aspartate-arginine dipeptides. This Synechocystis sp. (strain ATCC 27184 / PCC 6803 / Kazusa) protein is Cyanophycinase (cphB).